The primary structure comprises 259 residues: MSEVPVARVWLVLLLLTVQVGVTAGAPWQCAPCSAEKLALCPPVSASCSEVTRSAGCGCCPMCALPLGAACGVATARCARGLSCRALPGEQQPLHALTRGQGACVQESDASAPHAAEAGSPESPESTEITEEELLDNFHLMAPSEEDHSILWDAISTYDGSKALHVTNIKKWKEPCRIELYRVVESLAKAQETSGEEISKFYLPNCNKNGFYHSRQCETSMDGEAGLCWCVYPWNGKRIPGSPEIRGDPNCQIYFNVQN.

An N-terminal signal peptide occupies residues 1–25 (MSEVPVARVWLVLLLLTVQVGVTAG). One can recognise an IGFBP N-terminal domain in the interval 26–107 (APWQCAPCSA…TRGQGACVQE (82 aa)). Disulfide bonds link Cys30–Cys57, Cys33–Cys59, Cys41–Cys60, Cys48–Cys63, Cys71–Cys84, and Cys78–Cys104. A Phosphoserine; by FAM20C modification is found at Ser45. Ser120, Ser123, Ser126, and Ser144 each carry phosphoserine. Ser156 is subject to Phosphoserine; by FAM20C. Residue Thr157 is modified to Phosphothreonine; by FAM20C. A Phosphotyrosine modification is found at Tyr158. Residues 173–251 (KEPCRIELYR…SPEIRGDPNC (79 aa)) form the Thyroglobulin type-1 domain. Cystine bridges form between Cys176–Cys206, Cys217–Cys228, and Cys230–Cys251. Position 193 is a phosphothreonine; by FAM20C (Thr193). Phosphoserine; by FAM20C is present on residues Ser194 and Ser199. At Ser242 the chain carries Phosphoserine; by FAM20C. Residues 246–248 (RGD) carry the Cell attachment site motif.

As to quaternary structure, binds equally well IGF1 and IGF2. Interacts with integrin ITGA5:ITGB1. Interacts with VHL; this interaction inhibits HIF1A degradation. In terms of processing, phosphorylated; probably by casein kinase II. Phosphorylation alters the affinity of the protein for IGFs. In amniotic fluid, the unmodified protein is the most abundant form, while mono-, bi-, tri- and tetraphosphorylated forms are present in decreasing amounts. The phosphorylation state may influence the propensity to proteolysis.

The protein resides in the secreted. Functionally, multifunctional protein that plays a critical role in regulating the availability of IGFs such as IGF1 and IGF2 to their receptors and thereby regulates IGF-mediated cellular processes including cell migration, proliferation, differentiation or apoptosis in a cell-type specific manner. Also plays a positive role in cell migration by interacting with integrin ITGA5:ITGB1 through its RGD motif. Mechanistically, binding to integrins leads to activation of focal adhesion kinase/PTK2 and stimulation of the mitogen-activated protein kinase (MAPK) pathway. Regulates cardiomyocyte apoptosis by suppressing HIF-1alpha/HIF1A ubiquitination and subsequent degradation. The protein is Insulin-like growth factor-binding protein 1 (IGFBP1) of Homo sapiens (Human).